A 343-amino-acid polypeptide reads, in one-letter code: NADH-quinone oxidoreductase subunit H (343 aa).

The next 8 helical transmembrane spans lie at 5 to 25, 76 to 96, 119 to 139, 158 to 178, 190 to 210, 243 to 263, 284 to 304, and 323 to 343; these read FIIE…LMAM, FLFV…SAVI, ALLY…IGGW, VSYE…TGTL, MNWN…CAFA, LFAE…LFFG, ILGF…YMWV, and ILIP…LLFK.

Belongs to the complex I subunit 1 family. NDH-1 is composed of 14 different subunits. Subunits NuoA, H, J, K, L, M, N constitute the membrane sector of the complex.

The protein resides in the cell inner membrane. The enzyme catalyses a quinone + NADH + 5 H(+)(in) = a quinol + NAD(+) + 4 H(+)(out). In terms of biological role, NDH-1 shuttles electrons from NADH, via FMN and iron-sulfur (Fe-S) centers, to quinones in the respiratory chain. The immediate electron acceptor for the enzyme in this species is believed to be ubiquinone. Couples the redox reaction to proton translocation (for every two electrons transferred, four hydrogen ions are translocated across the cytoplasmic membrane), and thus conserves the redox energy in a proton gradient. This subunit may bind ubiquinone. In Flavobacterium psychrophilum (strain ATCC 49511 / DSM 21280 / CIP 103535 / JIP02/86), this protein is NADH-quinone oxidoreductase subunit H.